Here is a 346-residue protein sequence, read N- to C-terminus: Probable electron transfer flavoprotein subunit alpha, mitochondrial (346 aa).

285 to 313 contacts FAD; it reads LYVAVGISGAIQHLAGMKESKMIVAINKD.

The protein belongs to the ETF alpha-subunit/FixB family. Heterodimer of an alpha and a beta subunit. The cofactor is FAD.

The protein localises to the mitochondrion matrix. Functionally, the electron transfer flavoprotein serves as a specific electron acceptor for several dehydrogenases, including five acyl-CoA dehydrogenases, glutaryl-CoA and sarcosine dehydrogenase. It transfers the electrons to the main mitochondrial respiratory chain via ETF-ubiquinone oxidoreductase (ETF dehydrogenase). The polypeptide is Probable electron transfer flavoprotein subunit alpha, mitochondrial (ETF1) (Cryptococcus neoformans var. grubii (Filobasidiella neoformans var. grubii)).